A 124-amino-acid chain; its full sequence is Large ribosomal subunit protein bL19 (124 aa).

Belongs to the bacterial ribosomal protein bL19 family.

Its function is as follows. This protein is located at the 30S-50S ribosomal subunit interface and may play a role in the structure and function of the aminoacyl-tRNA binding site. This chain is Large ribosomal subunit protein bL19, found in Cereibacter sphaeroides (strain ATCC 17029 / ATH 2.4.9) (Rhodobacter sphaeroides).